Consider the following 171-residue polypeptide: 3-hydroxydecanoyl-[acyl-carrier-protein] dehydratase (171 aa).

His-71 is an active-site residue.

Belongs to the thioester dehydratase family. FabA subfamily. As to quaternary structure, homodimer.

It is found in the cytoplasm. The enzyme catalyses a (3R)-hydroxyacyl-[ACP] = a (2E)-enoyl-[ACP] + H2O. It catalyses the reaction (3R)-hydroxydecanoyl-[ACP] = (2E)-decenoyl-[ACP] + H2O. The catalysed reaction is (2E)-decenoyl-[ACP] = (3Z)-decenoyl-[ACP]. It participates in lipid metabolism; fatty acid biosynthesis. Necessary for the introduction of cis unsaturation into fatty acids. Catalyzes the dehydration of (3R)-3-hydroxydecanoyl-ACP to E-(2)-decenoyl-ACP and then its isomerization to Z-(3)-decenoyl-ACP. Can catalyze the dehydratase reaction for beta-hydroxyacyl-ACPs with saturated chain lengths up to 16:0, being most active on intermediate chain length. This Rhizobium meliloti (strain 1021) (Ensifer meliloti) protein is 3-hydroxydecanoyl-[acyl-carrier-protein] dehydratase.